Reading from the N-terminus, the 183-residue chain is Beta-defensin 129 (183 aa).

Positions 1 to 19 (MKLLFPIFASLMLQYQVNT) are cleaved as a signal peptide. Disulfide bonds link cysteine 27–cysteine 53, cysteine 34–cysteine 48, and cysteine 38–cysteine 54. The tract at residues 141–183 (TATSTKSNTKESRDSATASSPPAPPPPNILPTPSLELEEAEEQ) is disordered. A compositionally biased stretch (pro residues) spans 161–170 (PPAPPPPNIL).

Belongs to the beta-defensin family.

It localises to the secreted. In terms of biological role, has antibacterial activity. The protein is Beta-defensin 129 (DEFB129) of Gorilla gorilla gorilla (Western lowland gorilla).